A 356-amino-acid polypeptide reads, in one-letter code: Replication factor C subunit 3 (356 aa).

At lysine 20 the chain carries N6-acetyllysine. At serine 125 the chain carries Phosphoserine.

Belongs to the activator 1 small subunits family. In terms of assembly, subunit of the RFC complex, an heteropentameric complex consisting of a large subunit RFC1 and four small subunits RFC2, RFC3, RFC4 and RFC5; the RFC complex interacts with PCNA. Forms an heterotetrameric complex with RFC2, RFC4 and RFC5; this complex has ATPase activity but is not stimulated by PCNA. The heterotetramer of subunits RFC2, RFC3, RFC4 and RFC5 interacts with RAD17. Interacts with CNTD1; this interaction facilitates crossover formation.

The protein localises to the nucleus. Functionally, subunit of the replication factor C (RFC) complex which acts during elongation of primed DNA templates by DNA polymerases delta and epsilon, and is necessary for ATP-dependent loading of proliferating cell nuclear antigen (PCNA) onto primed DNA. This chain is Replication factor C subunit 3 (Rfc3), found in Mus musculus (Mouse).